The sequence spans 358 residues: MSATRSMEPDLRGRKVLLHDMCLRDGMHAKREQIPVEQMVKVAMALDAAGVPLIQVTHGAGLGGNSLQHGFALASNEAYLSAVAPKMKQAKVSVLLIPGLGTMRELQSAYNCGARSVTVATHCTEADTAPQHIAYARKLGMDTVGFLMMAHLNDPEGLAKQGKLMEDYGAQTVYVTDSAGYMLPADVRARVAALRAVLKPETEIGFHGHHNLGMGIANSIAAIEEGASRIDGSVAGLGAGAGNTPLEVFLAVCDRMGIETGVDLFKLMDVAEDVIVPMMDHLVRVDRESLTLGFAGVYSTFLLHAKRAAARFGVPAREILVELGRRKMIGGQEDMIEDTAMSMAKERGLLKDVSRKAA.

Residues 16-268 (VLLHDMCLRD…ETGVDLFKLM (253 aa)) enclose the Pyruvate carboxyltransferase domain. Substrate is bound at residue 24–25 (RD). D25 is a binding site for Mn(2+). Residue H28 is the Proton acceptor of the active site. Residues S178 and H207 each coordinate substrate. Mn(2+) is bound by residues H207 and H209. Y298 lines the substrate pocket.

Belongs to the 4-hydroxy-2-oxovalerate aldolase family.

The enzyme catalyses (S)-4-hydroxy-2-oxopentanoate = acetaldehyde + pyruvate. This is 4-hydroxy-2-oxovalerate aldolase 2 from Methylibium petroleiphilum (strain ATCC BAA-1232 / LMG 22953 / PM1).